The chain runs to 428 residues: Enolase (428 aa).

Glutamine 163 serves as a coordination point for (2R)-2-phosphoglycerate. Catalysis depends on glutamate 205, which acts as the Proton donor. 3 residues coordinate Mg(2+): aspartate 243, glutamate 286, and aspartate 313. (2R)-2-phosphoglycerate contacts are provided by lysine 338, arginine 367, serine 368, and lysine 389. Catalysis depends on lysine 338, which acts as the Proton acceptor.

It belongs to the enolase family. Mg(2+) is required as a cofactor.

It localises to the cytoplasm. The protein resides in the secreted. Its subcellular location is the cell surface. It carries out the reaction (2R)-2-phosphoglycerate = phosphoenolpyruvate + H2O. It functions in the pathway carbohydrate degradation; glycolysis; pyruvate from D-glyceraldehyde 3-phosphate: step 4/5. Functionally, catalyzes the reversible conversion of 2-phosphoglycerate (2-PG) into phosphoenolpyruvate (PEP). It is essential for the degradation of carbohydrates via glycolysis. This is Enolase from Polaromonas naphthalenivorans (strain CJ2).